The sequence spans 468 residues: UDP-N-acetylmuramate--L-alanine ligase (468 aa).

G112–T118 is a binding site for ATP.

It belongs to the MurCDEF family.

The protein localises to the cytoplasm. The catalysed reaction is UDP-N-acetyl-alpha-D-muramate + L-alanine + ATP = UDP-N-acetyl-alpha-D-muramoyl-L-alanine + ADP + phosphate + H(+). It participates in cell wall biogenesis; peptidoglycan biosynthesis. In terms of biological role, cell wall formation. The chain is UDP-N-acetylmuramate--L-alanine ligase from Koribacter versatilis (strain Ellin345).